A 336-amino-acid chain; its full sequence is UDP-N-acetylglucosamine--N-acetylmuramyl-(pentapeptide) pyrophosphoryl-undecaprenol N-acetylglucosamine transferase (336 aa).

UDP-N-acetyl-alpha-D-glucosamine contacts are provided by residues 10 to 12 (TGG), Asn124, Arg157, Ser179, and Gln277.

Belongs to the glycosyltransferase 28 family. MurG subfamily.

Its subcellular location is the cell inner membrane. It carries out the reaction di-trans,octa-cis-undecaprenyl diphospho-N-acetyl-alpha-D-muramoyl-L-alanyl-D-glutamyl-meso-2,6-diaminopimeloyl-D-alanyl-D-alanine + UDP-N-acetyl-alpha-D-glucosamine = di-trans,octa-cis-undecaprenyl diphospho-[N-acetyl-alpha-D-glucosaminyl-(1-&gt;4)]-N-acetyl-alpha-D-muramoyl-L-alanyl-D-glutamyl-meso-2,6-diaminopimeloyl-D-alanyl-D-alanine + UDP + H(+). The protein operates within cell wall biogenesis; peptidoglycan biosynthesis. Its function is as follows. Cell wall formation. Catalyzes the transfer of a GlcNAc subunit on undecaprenyl-pyrophosphoryl-MurNAc-pentapeptide (lipid intermediate I) to form undecaprenyl-pyrophosphoryl-MurNAc-(pentapeptide)GlcNAc (lipid intermediate II). In Wolinella succinogenes (strain ATCC 29543 / DSM 1740 / CCUG 13145 / JCM 31913 / LMG 7466 / NCTC 11488 / FDC 602W) (Vibrio succinogenes), this protein is UDP-N-acetylglucosamine--N-acetylmuramyl-(pentapeptide) pyrophosphoryl-undecaprenol N-acetylglucosamine transferase.